Reading from the N-terminus, the 306-residue chain is tRNA pseudouridine synthase B (306 aa).

Residue D43 is the Nucleophile of the active site.

This sequence belongs to the pseudouridine synthase TruB family. Type 1 subfamily.

The catalysed reaction is uridine(55) in tRNA = pseudouridine(55) in tRNA. In terms of biological role, responsible for synthesis of pseudouridine from uracil-55 in the psi GC loop of transfer RNAs. The sequence is that of tRNA pseudouridine synthase B from Lacticaseibacillus casei (strain BL23) (Lactobacillus casei).